A 445-amino-acid chain; its full sequence is Gamma-glutamyl phosphate reductase (445 aa).

This sequence belongs to the gamma-glutamyl phosphate reductase family.

The protein resides in the cytoplasm. The enzyme catalyses L-glutamate 5-semialdehyde + phosphate + NADP(+) = L-glutamyl 5-phosphate + NADPH + H(+). The protein operates within amino-acid biosynthesis; L-proline biosynthesis; L-glutamate 5-semialdehyde from L-glutamate: step 2/2. In terms of biological role, catalyzes the NADPH-dependent reduction of L-glutamate 5-phosphate into L-glutamate 5-semialdehyde and phosphate. The product spontaneously undergoes cyclization to form 1-pyrroline-5-carboxylate. This Persephonella marina (strain DSM 14350 / EX-H1) protein is Gamma-glutamyl phosphate reductase.